The following is a 580-amino-acid chain: 2-succinyl-5-enolpyruvyl-6-hydroxy-3-cyclohexene-1-carboxylate synthase (580 aa).

The protein belongs to the TPP enzyme family. MenD subfamily. In terms of assembly, homodimer. Requires Mg(2+) as cofactor. Mn(2+) serves as cofactor. The cofactor is thiamine diphosphate.

It carries out the reaction isochorismate + 2-oxoglutarate + H(+) = 5-enolpyruvoyl-6-hydroxy-2-succinyl-cyclohex-3-ene-1-carboxylate + CO2. It functions in the pathway quinol/quinone metabolism; 1,4-dihydroxy-2-naphthoate biosynthesis; 1,4-dihydroxy-2-naphthoate from chorismate: step 2/7. Its pathway is quinol/quinone metabolism; menaquinone biosynthesis. Functionally, catalyzes the thiamine diphosphate-dependent decarboxylation of 2-oxoglutarate and the subsequent addition of the resulting succinic semialdehyde-thiamine pyrophosphate anion to isochorismate to yield 2-succinyl-5-enolpyruvyl-6-hydroxy-3-cyclohexene-1-carboxylate (SEPHCHC). The protein is 2-succinyl-5-enolpyruvyl-6-hydroxy-3-cyclohexene-1-carboxylate synthase of Bacillus pumilus (strain SAFR-032).